The chain runs to 167 residues: MLSKEVVKLLNEQINKEMYAANLYLSMSSWCYENSLDGAGAFLFAHASEESDHAKKLITYLNETDSHVELQEVKQPEQNFKSLLDVFEKTYEHEQFITKSINTLVEHMLTHKDYSTFNFLQWYVSEQHEEEALFRGIVDKIKLIGEHGNGLYLADQYIKNIALSRKK.

In terms of domain architecture, Ferritin-like diiron spans 1–145 (MLSKEVVKLL…GIVDKIKLIG (145 aa)). Positions 17, 50, 53, 94, and 127 each coordinate Fe cation.

The protein belongs to the ferritin family. Prokaryotic subfamily. In terms of assembly, homooligomer of 24 subunits that assemble into a spherical protein shell (12 +/- 1 nM diameter) that can sequester at least 2000 iron atoms.

Its subcellular location is the cytoplasm. The enzyme catalyses 4 Fe(2+) + O2 + 6 H2O = 4 iron(III) oxide-hydroxide + 12 H(+). Iron-storage protein. This is Bacterial non-heme ferritin (ftn) from Campylobacter jejuni subsp. jejuni serotype O:2 (strain ATCC 700819 / NCTC 11168).